The chain runs to 2344 residues: Peroxide stress-activated histidine kinase mak3 (2344 aa).

Residues 1-295 form the Protein kinase domain; that stretch reads MYSQHELRNK…GIVNDLEACL (295 aa). Residues Ser12, Ser16, and Ser17 each carry the phosphoserine modification. The span at 486–503 shows a compositional bias: polar residues; it reads SGNTRKTSLLGSNHSSYS. The disordered stretch occupies residues 486 to 506; it reads SGNTRKTSLLGSNHSSYSDKL. TPR repeat units lie at residues 829 to 862 and 1340 to 1373; these read CHYL…IPHE and AFAF…YAAL. The 52-residue stretch at 1730–1781 folds into the PAC domain; sequence FELEIRIKRKDGVYRWNLTRCTPTTNEKNRTSFLCATIDIDDQKKARATALE. A Histidine kinase domain is found at 1792–2018; that stretch reads NISHELRTPF…TFKICYDLKI (227 aa). Phosphohistidine; by autocatalysis is present on His1795. Positions 2211-2333 constitute a Response regulatory domain; the sequence is KILIAEDNPI…TLIKMLLQYL (123 aa). A 4-aspartylphosphate modification is found at Asp2263.

The protein localises to the cytoplasm. The enzyme catalyses ATP + protein L-histidine = ADP + protein N-phospho-L-histidine.. Functionally, involved in the control of the SAPK-dependent transcriptional response to peroxide stress. Regulates sty1 activity. The chain is Peroxide stress-activated histidine kinase mak3 (mak3) from Schizosaccharomyces pombe (strain 972 / ATCC 24843) (Fission yeast).